A 455-amino-acid polypeptide reads, in one-letter code: Phosphoglucosamine mutase (455 aa).

Ser-107 serves as the catalytic Phosphoserine intermediate. 4 residues coordinate Mg(2+): Ser-107, Asp-247, Asp-249, and Asp-251. Ser-107 is modified (phosphoserine).

Belongs to the phosphohexose mutase family. Mg(2+) serves as cofactor. In terms of processing, activated by phosphorylation.

It carries out the reaction alpha-D-glucosamine 1-phosphate = D-glucosamine 6-phosphate. Catalyzes the conversion of glucosamine-6-phosphate to glucosamine-1-phosphate. The chain is Phosphoglucosamine mutase from Leuconostoc citreum (strain KM20).